The sequence spans 190 residues: Probable nicotinate-nucleotide adenylyltransferase (190 aa).

Belongs to the NadD family.

It carries out the reaction nicotinate beta-D-ribonucleotide + ATP + H(+) = deamido-NAD(+) + diphosphate. It participates in cofactor biosynthesis; NAD(+) biosynthesis; deamido-NAD(+) from nicotinate D-ribonucleotide: step 1/1. In terms of biological role, catalyzes the reversible adenylation of nicotinate mononucleotide (NaMN) to nicotinic acid adenine dinucleotide (NaAD). This Staphylococcus saprophyticus subsp. saprophyticus (strain ATCC 15305 / DSM 20229 / NCIMB 8711 / NCTC 7292 / S-41) protein is Probable nicotinate-nucleotide adenylyltransferase.